Here is a 455-residue protein sequence, read N- to C-terminus: Bifunctional protein GlmU (455 aa).

Residues 1–226 are pyrophosphorylase; that stretch reads MGLSVVILAA…EFEILGVNDR (226 aa). UDP-N-acetyl-alpha-D-glucosamine is bound by residues 8–11, lysine 22, glutamine 73, 78–79, 99–101, glycine 136, glutamate 151, asparagine 166, and asparagine 224; these read LAAG, GT, and YGD. Position 101 (aspartate 101) interacts with Mg(2+). Asparagine 224 contacts Mg(2+). A linker region spans residues 227–247; the sequence is TQLASLERVWQRNVAEKIMAK. The segment at 248–455 is N-acetyltransferase; that stretch reads GVSIADPNRF…WQRSVKKTDK (208 aa). 2 residues coordinate UDP-N-acetyl-alpha-D-glucosamine: arginine 330 and lysine 348. The Proton acceptor role is filled by histidine 360. Residues tyrosine 363 and asparagine 374 each contribute to the UDP-N-acetyl-alpha-D-glucosamine site. Residues alanine 377, 383–384, serine 402, alanine 420, and arginine 437 each bind acetyl-CoA; that span reads NY.

It in the N-terminal section; belongs to the N-acetylglucosamine-1-phosphate uridyltransferase family. This sequence in the C-terminal section; belongs to the transferase hexapeptide repeat family. As to quaternary structure, homotrimer. Mg(2+) serves as cofactor.

The protein localises to the cytoplasm. The catalysed reaction is alpha-D-glucosamine 1-phosphate + acetyl-CoA = N-acetyl-alpha-D-glucosamine 1-phosphate + CoA + H(+). It carries out the reaction N-acetyl-alpha-D-glucosamine 1-phosphate + UTP + H(+) = UDP-N-acetyl-alpha-D-glucosamine + diphosphate. It functions in the pathway nucleotide-sugar biosynthesis; UDP-N-acetyl-alpha-D-glucosamine biosynthesis; N-acetyl-alpha-D-glucosamine 1-phosphate from alpha-D-glucosamine 6-phosphate (route II): step 2/2. The protein operates within nucleotide-sugar biosynthesis; UDP-N-acetyl-alpha-D-glucosamine biosynthesis; UDP-N-acetyl-alpha-D-glucosamine from N-acetyl-alpha-D-glucosamine 1-phosphate: step 1/1. It participates in bacterial outer membrane biogenesis; LPS lipid A biosynthesis. Its function is as follows. Catalyzes the last two sequential reactions in the de novo biosynthetic pathway for UDP-N-acetylglucosamine (UDP-GlcNAc). The C-terminal domain catalyzes the transfer of acetyl group from acetyl coenzyme A to glucosamine-1-phosphate (GlcN-1-P) to produce N-acetylglucosamine-1-phosphate (GlcNAc-1-P), which is converted into UDP-GlcNAc by the transfer of uridine 5-monophosphate (from uridine 5-triphosphate), a reaction catalyzed by the N-terminal domain. This chain is Bifunctional protein GlmU, found in Francisella tularensis subsp. tularensis (strain FSC 198).